A 490-amino-acid chain; its full sequence is Transcriptional activator/repressor MOT3 (490 aa).

Methionine 1 is modified (N-acetylmethionine). Disordered stretches follow at residues 1 to 69, 101 to 162, and 214 to 267; these read MNAD…NKDD, NNNN…HPNQ, and NNGN…PQHH. A compositionally biased stretch (low complexity) spans 8-36; sequence QQQQQQRQQHQQQQHQQQQHQHQHQQQQH. Polar residues predominate over residues 37-65; sequence TILQNVSNTNNIGSDSLASQPFNTTTVSS. The segment at 98–295 is prion domain (PrD); it reads NNSNNNNVTA…NLNLNINPAQ (198 aa). Low complexity-rich tracts occupy residues 119 to 128, 138 to 157, 214 to 232, and 248 to 264; these read NNSNNSNNSN, NNST…NNNN, NNGN…HSAP, and THNN…NNAP. 2 consecutive C2H2-type zinc fingers follow at residues 346 to 368 and 374 to 397; these read HQCQ…LLSH and FLCP…KLKH. The segment covering 421–436 has biased composition (low complexity); that stretch reads NNNNDNNNNNNSNSAS. Residues 421–458 are disordered; it reads NNNNDNNNNNNSNSASGSGGAGAAAAAATAPENEDGNG.

It localises to the nucleus. Functionally, transcription factor that affects the expression of a large set of genes. Recognizes and binds to the consensus sequence 5'-[CAT]AGG[TC]A-3' in the promoter region. Plays a major role in the repression of a specific subset of hypoxic genes (e.g. ANB1, DAN1 and HEM13) under aerobic conditions. Acts synergistically with the transcription factor ROX1 to recruit the general repression complex SSN6-TUP1 to the promoter of hypoxic genes. Represses transcription of ergosterol biosynthetic genes. Negatively regulates pheromone-induced gene expression. Can act as a transcriptional activator (e.g. of genes like CYC1, SUC2 and the Ty long terminal repeat delta promoter). In Saccharomyces cerevisiae (strain ATCC 204508 / S288c) (Baker's yeast), this protein is Transcriptional activator/repressor MOT3 (MOT3).